A 234-amino-acid polypeptide reads, in one-letter code: Urease accessory protein UreG 1 (234 aa).

The tract at residues 1–29 (MTRTPTGVPMHLGHTHDAPAAVSADATRP) is disordered. Residue 42-49 (GPVGSGKT) coordinates GTP.

The protein belongs to the SIMIBI class G3E GTPase family. UreG subfamily. As to quaternary structure, homodimer. UreD, UreF and UreG form a complex that acts as a GTP-hydrolysis-dependent molecular chaperone, activating the urease apoprotein by helping to assemble the nickel containing metallocenter of UreC. The UreE protein probably delivers the nickel.

It is found in the cytoplasm. Facilitates the functional incorporation of the urease nickel metallocenter. This process requires GTP hydrolysis, probably effectuated by UreG. This Streptomyces griseus subsp. griseus (strain JCM 4626 / CBS 651.72 / NBRC 13350 / KCC S-0626 / ISP 5235) protein is Urease accessory protein UreG 1.